Here is a 336-residue protein sequence, read N- to C-terminus: MMNTLLQQAPSWGTTLWFIIAAVLLLAVVLGFVTYAIYFERKVIGWMQLRIGPNRVGPLGLLQTVADVAKLLLKEDIRPQHADKALFTLAPILAYAPAFAVLAVMPFTDSIRFADLGIGLLYYIALSGITVLGVITAGWASNNKYSLIGGLRSAAQMISYEVPLVMSVVGIVLLTGSMNLKDIVEAQRDVWNIVPQFIGFAVFIIAAQAELNRTPFDLPEAESELVGGYHVEYSGFRFAMFMLAEYVYMFGMGALITILFFGGWLPIHPSLDFIPGIVWFILKFSVYVFLQFWIRATMPRLRVDQLMSFAWKVLLPVALFNILLTAVVVSYQNGMF.

8 helical membrane-spanning segments follow: residues 17-37 (WFII…TYAI), 85-105 (ALFT…LAVM), 116-136 (LGIG…GVIT), 154-174 (AAQM…IVLL), 190-210 (VWNI…AQAE), 247-267 (VYMF…WLPI), 274-294 (IPGI…QFWI), and 309-329 (FAWK…AVVV).

The protein belongs to the complex I subunit 1 family. As to quaternary structure, NDH-1 is composed of 14 different subunits. Subunits NuoA, H, J, K, L, M, N constitute the membrane sector of the complex.

Its subcellular location is the cell membrane. The catalysed reaction is a quinone + NADH + 5 H(+)(in) = a quinol + NAD(+) + 4 H(+)(out). Its function is as follows. NDH-1 shuttles electrons from NADH, via FMN and iron-sulfur (Fe-S) centers, to quinones in the respiratory chain. The immediate electron acceptor for the enzyme in this species is believed to be ubiquinone. Couples the redox reaction to proton translocation (for every two electrons transferred, four hydrogen ions are translocated across the cytoplasmic membrane), and thus conserves the redox energy in a proton gradient. This subunit may bind ubiquinone. The polypeptide is NADH-quinone oxidoreductase subunit H (Brevibacillus brevis (strain 47 / JCM 6285 / NBRC 100599)).